The following is a 109-amino-acid chain: MAYQLYRNTTLGNSLQESLDELIQSQQITPQLALQVLLQFDKAINAALAQRVRNRVNFRGSLNTYRFCDNVWTFVLNDVEFREVTELIKVDKVKIVACDGKNTGSNTTE.

Belongs to the TFIIA subunit 2 family. As to quaternary structure, TFIIA is a heterodimer of the large unprocessed subunit 1 and a small subunit gamma. It was originally believed to be a heterotrimer of an alpha (p35), a beta (p19) and a gamma subunit (p12). Interacts with NCOA6 general coactivator. TFIIA forms a complex with TBP. Interacts with HSF1 (via transactivation domain). Part of TBP-based Pol II pre-initiation complex (PIC), in which Pol II core assembles with general transcription factors and other specific initiation factors including GTF2E1, GTF2E2, GTF2F1, GTF2F2, TCEA1, ERCC2, ERCC3, GTF2H2, GTF2H3, GTF2H4, GTF2H5, GTF2A1, GTF2A2, GTF2B and TBP; this large multi-subunit PIC complex mediates DNA unwinding and targets Pol II core to the transcription start site where the first phosphodiester bond forms. (Microbial infection) Interacts with SV40 Large T antigen.

It localises to the nucleus. TFIIA is a component of the transcription machinery of RNA polymerase II and plays an important role in transcriptional activation. TFIIA in a complex with TBP mediates transcriptional activity. The polypeptide is Transcription initiation factor IIA subunit 2 (GTF2A2) (Homo sapiens (Human)).